The chain runs to 295 residues: Ankyrin repeat and SOCS box protein 17 (295 aa).

One copy of the ANK repeat lies at 146 to 176 (SGITPLFYVAQTRQSNIFKILLQYGILEREK). The SOCS box domain occupies 232–295 (LGRRPIISNW…RLQNYLNLEI (64 aa)).

Belongs to the ankyrin SOCS box (ASB) family.

It functions in the pathway protein modification; protein ubiquitination. In terms of biological role, may be a substrate-recognition component of a SCF-like ECS (Elongin-Cullin-SOCS-box protein) E3 ubiquitin-protein ligase complex which mediates the ubiquitination and subsequent proteasomal degradation of target proteins. The polypeptide is Ankyrin repeat and SOCS box protein 17 (ASB17) (Macaca fascicularis (Crab-eating macaque)).